The primary structure comprises 422 residues: Tyrosine--tRNA ligase (422 aa).

An L-tyrosine-binding site is contributed by Y35. The 'HIGH' region motif lies at 40–49 (PTAPSLHLGN). The L-tyrosine site is built by Y170 and Q174. The 'KMSKS' region motif lies at 231–235 (KFGKT). K234 is an ATP binding site. The 67-residue stretch at 353–419 (APVVDLFAEV…GKKNLAAVEV (67 aa)) folds into the S4 RNA-binding domain.

It belongs to the class-I aminoacyl-tRNA synthetase family. TyrS type 1 subfamily. In terms of assembly, homodimer.

Its subcellular location is the cytoplasm. The catalysed reaction is tRNA(Tyr) + L-tyrosine + ATP = L-tyrosyl-tRNA(Tyr) + AMP + diphosphate + H(+). In terms of biological role, catalyzes the attachment of tyrosine to tRNA(Tyr) in a two-step reaction: tyrosine is first activated by ATP to form Tyr-AMP and then transferred to the acceptor end of tRNA(Tyr). The polypeptide is Tyrosine--tRNA ligase (Streptomyces avermitilis (strain ATCC 31267 / DSM 46492 / JCM 5070 / NBRC 14893 / NCIMB 12804 / NRRL 8165 / MA-4680)).